The sequence spans 593 residues: Meiosis-specific APC/C activator protein AMA1 (593 aa).

A compositionally biased stretch (basic residues) spans 1-11 (MATPHLYHRYN). Residues 1-26 (MATPHLYHRYNSKSSNKNINSSGNST) are disordered. Low complexity predominate over residues 12 to 25 (SKSSNKNINSSGNS). Residues 29 to 35 (DRFIPKS) carry the C-box motif. Residues 94-109 (SSISSSSESQVTRSGS) are compositionally biased toward low complexity. Residues 94–125 (SSISSSSESQVTRSGSARASRNDYSKLTKEQK) form a disordered region. Positions 113 to 125 (SRNDYSKLTKEQK) are enriched in basic and acidic residues. 6 WD repeats span residues 226-264 (RNDF…VSIL), 271-310 (EKRD…HSSN), 323-364 (ESFK…FPIK), 388-427 (AQAQ…KPIK), 432-474 (PHKA…LLDE), and 525-564 (PNPL…EEII).

The protein belongs to the WD repeat CDC20/Fizzy family. Interacts with CDC16.

Functionally, activator protein that regulates the ubiquitin ligase activity and substrate specificity of the anaphase promoting complex/cyclosome (APC/C). Required for the ubiquitination and subsequent degradation of the B-type cyclin CLB1 by the APC/C complex during meiosis. Required for meiosis I, late meiotic gene expression and spore wall assembly. In Saccharomyces cerevisiae (strain ATCC 204508 / S288c) (Baker's yeast), this protein is Meiosis-specific APC/C activator protein AMA1 (AMA1).